The sequence spans 462 residues: Ribosomal protein uS12 methylthiotransferase RimO (462 aa).

In terms of domain architecture, MTTase N-terminal spans 10-125 (PRIGMVSLGC…VLDAVHRNLP (116 aa)). Residues Cys19, Cys55, Cys84, Cys160, Cys164, and Cys167 each coordinate [4Fe-4S] cluster. One can recognise a Radical SAM core domain in the interval 146 to 388 (LTPRHYAYLK…AVAEALSSAK (243 aa)). Residues 390–462 (QRRVGATMQV…RGHDLLAQPI (73 aa)) enclose the TRAM domain.

The protein belongs to the methylthiotransferase family. RimO subfamily. It depends on [4Fe-4S] cluster as a cofactor.

The protein localises to the cytoplasm. The catalysed reaction is L-aspartate(89)-[ribosomal protein uS12]-hydrogen + (sulfur carrier)-SH + AH2 + 2 S-adenosyl-L-methionine = 3-methylsulfanyl-L-aspartate(89)-[ribosomal protein uS12]-hydrogen + (sulfur carrier)-H + 5'-deoxyadenosine + L-methionine + A + S-adenosyl-L-homocysteine + 2 H(+). Functionally, catalyzes the methylthiolation of an aspartic acid residue of ribosomal protein uS12. This Verminephrobacter eiseniae (strain EF01-2) protein is Ribosomal protein uS12 methylthiotransferase RimO.